The primary structure comprises 527 residues: Peptide chain release factor 3 (527 aa).

One can recognise a tr-type G domain in the interval 9–277 (AKRRTFAIIS…AVVDWAPRPL (269 aa)). Residues 18–25 (SHPDAGKT), 86–90 (DTPGH), and 140–143 (NKLD) contribute to the GTP site.

The protein belongs to the TRAFAC class translation factor GTPase superfamily. Classic translation factor GTPase family. PrfC subfamily.

It is found in the cytoplasm. Its function is as follows. Increases the formation of ribosomal termination complexes and stimulates activities of RF-1 and RF-2. It binds guanine nucleotides and has strong preference for UGA stop codons. It may interact directly with the ribosome. The stimulation of RF-1 and RF-2 is significantly reduced by GTP and GDP, but not by GMP. This is Peptide chain release factor 3 from Pseudomonas fluorescens (strain SBW25).